Here is an 829-residue protein sequence, read N- to C-terminus: Probable methyltransferase PMT26 (829 aa).

Residues 1 to 17 (MAQPRYTRIDNRRPSSN) lie on the Cytoplasmic side of the membrane. Residues 18–38 (YCSTVTVVVFVALCLVGIWMM) traverse the membrane as a helical; Signal-anchor for type II membrane protein segment. At 39–829 (TSSSVGPAQN…EVETLTYAIG (791 aa)) the chain is on the lumenal side. Residues 55 to 258 (DNKDGIKKQM…TSGDLSPPGA (204 aa)) form a disordered region. 4 stretches are compositionally biased toward basic and acidic residues: residues 85 to 143 (NEDK…DSKS), 151 to 160 (LDEKKDLKDN), 168 to 177 (TNEKQTKPET), and 187 to 231 (ENQK…KENT). N-linked (GlcNAc...) asparagine glycans are attached at residues Asn-215, Asn-247, Asn-264, and Asn-270. Polar residues predominate over residues 241–252 (QEGQSKNETSGD). Positions 271 to 291 (GSFSTQATESKNEKEAQKGSG) are disordered. A compositionally biased stretch (basic and acidic residues) spans 280–291 (SKNEKEAQKGSG). N-linked (GlcNAc...) asparagine glycosylation is found at Asn-302, Asn-579, Asn-595, and Asn-756.

This sequence belongs to the methyltransferase superfamily.

It localises to the golgi apparatus membrane. The sequence is that of Probable methyltransferase PMT26 from Arabidopsis thaliana (Mouse-ear cress).